The primary structure comprises 189 residues: NADH-quinone oxidoreductase subunit B (189 aa).

[4Fe-4S] cluster contacts are provided by Cys-39, Cys-40, Cys-104, and Cys-135.

It belongs to the complex I 20 kDa subunit family. As to quaternary structure, NDH-1 is composed of 14 different subunits. Subunits NuoB, C, D, E, F, and G constitute the peripheral sector of the complex. [4Fe-4S] cluster is required as a cofactor.

Its subcellular location is the cell inner membrane. The enzyme catalyses a quinone + NADH + 5 H(+)(in) = a quinol + NAD(+) + 4 H(+)(out). Functionally, NDH-1 shuttles electrons from NADH, via FMN and iron-sulfur (Fe-S) centers, to quinones in the respiratory chain. The immediate electron acceptor for the enzyme in this species is believed to be a menaquinone. Couples the redox reaction to proton translocation (for every two electrons transferred, four hydrogen ions are translocated across the cytoplasmic membrane), and thus conserves the redox energy in a proton gradient. The chain is NADH-quinone oxidoreductase subunit B from Chlorobium limicola (strain DSM 245 / NBRC 103803 / 6330).